The chain runs to 867 residues: Translation initiation factor IF-2 (867 aa).

Residues threonine 367 to glutamate 534 form the tr-type G domain. Residues glycine 376 to threonine 383 are G1. Glycine 376–threonine 383 contacts GTP. Residues glycine 401–asparagine 405 are G2. The G3 stretch occupies residues aspartate 422–glycine 425. Residues aspartate 422 to histidine 426 and asparagine 476 to aspartate 479 each bind GTP. Residues asparagine 476–aspartate 479 form a G4 region. The segment at serine 512–lysine 514 is G5.

The protein belongs to the TRAFAC class translation factor GTPase superfamily. Classic translation factor GTPase family. IF-2 subfamily.

The protein localises to the cytoplasm. Its function is as follows. One of the essential components for the initiation of protein synthesis. Protects formylmethionyl-tRNA from spontaneous hydrolysis and promotes its binding to the 30S ribosomal subunits. Also involved in the hydrolysis of GTP during the formation of the 70S ribosomal complex. The protein is Translation initiation factor IF-2 of Buchnera aphidicola subsp. Schizaphis graminum (strain Sg).